Consider the following 144-residue polypeptide: 6-pyruvoyl tetrahydrobiopterin synthase (144 aa).

Residues 1-4 (MNAA) constitute a propeptide that is removed on maturation. Position 18 is a phosphoserine (Ser18). His23 provides a ligand contact to Zn(2+). Ser27 bears the Phosphoserine mark. Cys42 (proton acceptor) is an active-site residue. The Zn(2+) site is built by His48 and His50. The active-site Charge relay system is the His89. A Phosphotyrosine modification is found at Tyr127. Glu133 acts as the Charge relay system in catalysis.

It belongs to the PTPS family. As to quaternary structure, homohexamer formed of two homotrimers in a head to head fashion. Zn(2+) is required as a cofactor. In terms of processing, phosphorylation of Ser-18 is required for maximal enzyme activity.

It carries out the reaction 7,8-dihydroneopterin 3'-triphosphate = 6-pyruvoyl-5,6,7,8-tetrahydropterin + triphosphate + H(+). It functions in the pathway cofactor biosynthesis; tetrahydrobiopterin biosynthesis; tetrahydrobiopterin from 7,8-dihydroneopterin triphosphate: step 1/3. In terms of biological role, involved in the biosynthesis of tetrahydrobiopterin, an essential cofactor of aromatic amino acid hydroxylases. Catalyzes the transformation of 7,8-dihydroneopterin triphosphate into 6-pyruvoyl tetrahydropterin. The protein is 6-pyruvoyl tetrahydrobiopterin synthase (Pts) of Rattus norvegicus (Rat).